A 147-amino-acid chain; its full sequence is Hemoglobin subunit epsilon (147 aa).

In terms of domain architecture, Globin spans 3–147; that stretch reads HFTAEEKAII…VATALAHKYH (145 aa). A phosphoserine mark is found at S14 and S51. Residues H64 and H93 each coordinate heme b.

Belongs to the globin family. In terms of assembly, heterotetramer of two alpha chains and two epsilon chains in early embryonic hemoglobin Gower-2; two zeta chains and two epsilon chains in early embryonic hemoglobin Gower-1. In terms of tissue distribution, red blood cells.

Its function is as follows. The epsilon chain is a beta-type chain of early mammalian embryonic hemoglobin. The sequence is that of Hemoglobin subunit epsilon (HBE1) from Otolemur crassicaudatus (Brown greater galago).